The primary structure comprises 69 residues: MFTLKKTLLLLFFLGTISISLCKQARDADEDDGRKMTEEEVKRSIITMTREAKLPQLWKQIACRLYNTC.

A signal peptide spans 1–22 (MFTLKKTLLLLFFLGTISISLC). The propeptide occupies 23–43 (KQARDADEDDGRKMTEEEVKR). A disulfide bond links Cys63 and Cys69.

This sequence belongs to the frog skin active peptide (FSAP) family. Pleurain subfamily. As to expression, expressed by the skin glands.

It is found in the secreted. Antimicrobial peptide. Has activity against Gram-positive and -negative bacteria, and fungi. Has little hemolytic activity on red blood cells. This chain is Pleurain-A3, found in Nidirana pleuraden (Yunnan pond frog).